A 31-amino-acid polypeptide reads, in one-letter code: Cytochrome b6-f complex subunit 6 (31 aa).

Residues 3-23 traverse the membrane as a helical segment; sequence TITSYFGFLLAALTITPALFI.

The protein belongs to the PetL family. In terms of assembly, the 4 large subunits of the cytochrome b6-f complex are cytochrome b6, subunit IV (17 kDa polypeptide, PetD), cytochrome f and the Rieske protein, while the 4 small subunits are PetG, PetL, PetM and PetN. The complex functions as a dimer.

The protein localises to the plastid. Its subcellular location is the chloroplast thylakoid membrane. Functionally, component of the cytochrome b6-f complex, which mediates electron transfer between photosystem II (PSII) and photosystem I (PSI), cyclic electron flow around PSI, and state transitions. PetL is important for photoautotrophic growth as well as for electron transfer efficiency and stability of the cytochrome b6-f complex. In Zea mays (Maize), this protein is Cytochrome b6-f complex subunit 6.